The primary structure comprises 517 residues: Cytochrome P450 monooxygenase sdnE (517 aa).

A helical transmembrane segment spans residues 4-24 (SSILQTLAVLYVLYLLGLIIY). The N-linked (GlcNAc...) asparagine glycan is linked to Asn-111. Residues 219–239 (FPVVFIILGLSPRAMLKLVVP) traverse the membrane as a helical segment. Cys-456 is a heme binding site.

It belongs to the cytochrome P450 family. The cofactor is heme.

It localises to the membrane. It functions in the pathway antibiotic biosynthesis. In terms of biological role, cytochrome P450 monooxygenase; part of the gene cluster that mediates the biosynthesis of sordarin and hypoxysordarin, glycoside antibiotics with a unique tetracyclic diterpene aglycone structure. First, the geranylgeranyl diphosphate synthase sdnC constructs GGDP from farnesyl diphosphate and isopentenyl diphosphate. The diterpene cyclase sdnA then catalyzes the cyclization of GGDP to afford cycloaraneosene. Cycloaraneosene is then hydroxylated four times by the putative cytochrome P450 monooxygenases sdnB, sdnE, sdnF and sdnH to give a hydroxylated cycloaraneosene derivative such as cycloaraneosene-8,9,13,19-tetraol. Although the order of the hydroxylations is unclear, at least C8, C9 and C13 of the cycloaraneosene skeleton are hydroxylated before the sordaricin formation. Dehydration of the 13-hydroxy group of the hydroxylated cycloaraneosene derivative might be catalyzed by an unassigned hypothetical protein such as sdnG and sdnP to construct the cyclopentadiene moiety. The FAD-dependent oxidoreductase sdnN is proposed to catalyze the oxidation at C9 of the hydroxylated cycloaraneosene derivative and also catalyze the Baeyer-Villiger oxidation to give the lactone intermediate. The presumed lactone intermediate would be hydrolyzed to give an acrolein moiety and a carboxylate moiety. Then, [4+2]cycloaddition would occur between the acrolein moiety and the cyclopentadiene moiety to give sordaricin. SdnN might also be involved in the [4+2]cycloaddition after the hypothesized oxidation to accommodate the oxidized product and prompt the [4+2]cycloaddition. GDP-6-deoxy-D-altrose may be biosynthesized from GDP-D-mannose by the putative GDP-mannose-4,6-dehydratase sdnI and the short-chain dehydrogenase sdnK. The glycosyltransferase sdnJ catalyzes the attachment of 6-deoxy-D-altrose onto the 19-hydroxy group of sordaricin to give 4'-O-demethylsordarin. The methyltransferase sdnD would complete the biosynthesis of sordarin. Sordarin can be further modified into hypoxysordarin. The unique acyl chain at the 3'-hydroxy group of hypoxysordarin would be constructed by an iterative type I PKS sdnO and the trans-acting polyketide methyltransferase sdnL. SdnL would be responsible for the introduction of an alpha-methyl group of the polyketide chain. Alternatively, the beta-lactamase-like protein sdnR might be responsible for the cleavage and transfer of the polyketide chain from the PKS sdnO to sordarin. Two putative cytochrome P450 monooxygenases, sdnQ and sdnT, might catalyze the epoxidations of the polyketide chain to complete the biosynthesis of hypoxysordarin. Transcriptional regulators sdnM and sdnS are presumably encoded for the transcriptional regulation of the expression of the sdn gene cluster. This Sordaria araneosa (Pleurage araneosa) protein is Cytochrome P450 monooxygenase sdnE.